Here is a 193-residue protein sequence, read N- to C-terminus: Biphenyl dioxygenase subunit beta (193 aa).

The protein belongs to the bacterial ring-hydroxylating dioxygenase beta subunit family. As to quaternary structure, heterohexamer consisting of 3 BphA1 subunits and 3 BphA2 subunits. A ferredoxin (BphA3) and a ferredoxin reductase (BphA4) must be present to obtain activity.

It carries out the reaction biphenyl + NADH + O2 + H(+) = (2R,3S)-3-phenylcyclohexa-3,5-diene-1,2-diol + NAD(+). Its pathway is xenobiotic degradation; biphenyl degradation; 2-hydroxy-2,4-pentadienoate and benzoate from biphenyl: step 1/4. Functionally, the beta subunit may be responsible for the substrate specificity of the enzyme. In Pseudomonas sp. (strain KKS102), this protein is Biphenyl dioxygenase subunit beta (bphA2).